Consider the following 323-residue polypeptide: Replication factor C subunit 4 (323 aa).

ATP-binding positions include valine 12, valine 24, 49 to 57 (GMPGIGKTT), asparagine 145, and arginine 203.

This sequence belongs to the activator 1 small subunits family. As to quaternary structure, replication factor C (RFC) is a heteropentamer of subunits RFC1, RFC2, RFC3, RFC4 and RFC5 and forms a complex with POL30/PCNA in the presence of ATP. Component of the RAD24-RFC complex which consists of RAD14, RFC2, RFC3, RFC4 and RFC5 and associates with the checkpoint clamp DDC1:MEC3:RAD17 complex. Component of the ELG1-RFC complex which consists of ELG1, RFC2, RFC3, RFC4 and RFC5. Component of the CTF18-RFC complex, which consists of CTF18, CTF8, DCC1, RFC2, RFC3, RFC4 and RFC5. RFC4 interacts with ECO1.

The protein resides in the nucleus. Functionally, component of ATP-dependent clamp loader (RFC and RFC-like) complexes for DNA clamps, such as the POL30/PCNA homotrimer and the checkpoint clamp DDC1:MEC3:RAD17 complex. During a clamp loading circle, the RFC:clamp complex binds to DNA and the recognition of the double-stranded/single-stranded junction stimulates ATP hydrolysis by RFC. The complex presumably provides bipartite ATP sites in which one subunit supplies a catalytic site for hydrolysis of ATP bound to the neighboring subunit. Dissociation of RFC from the clamp leaves the clamp encircling DNA. Component of the replication factor C (RFC or activator 1) complex which loads POL30/PCNA and acts during elongation of primed DNA templates by DNA polymerase delta and epsilon. RFC has an essential but redundant activity in sister chromatid cohesion establishment. Component of the RFC-like complex CTF18-RFC which is required for efficient establishment of chromosome cohesion during S-phase and may load or unload POL30/PCNA. Component of the RFC-like RAD24-RFC complex which loads the checkpoint clamp DDC1:MEC3:RAD17 complex and is involved in DNA repair pathways. Component of the RFC-like ELG1-RFC complex which appears to have a role in DNA replication, replication fork re-start, recombination and repair. This chain is Replication factor C subunit 4 (RFC4), found in Saccharomyces cerevisiae (strain ATCC 204508 / S288c) (Baker's yeast).